The primary structure comprises 416 residues: Serine hydroxymethyltransferase (416 aa).

(6S)-5,6,7,8-tetrahydrofolate-binding positions include leucine 118 and 122–124 (GHL). N6-(pyridoxal phosphate)lysine is present on lysine 226. (6S)-5,6,7,8-tetrahydrofolate is bound by residues glutamate 242 and 350 to 352 (SPF).

It belongs to the SHMT family. Homodimer. Requires pyridoxal 5'-phosphate as cofactor.

The protein localises to the cytoplasm. The enzyme catalyses (6R)-5,10-methylene-5,6,7,8-tetrahydrofolate + glycine + H2O = (6S)-5,6,7,8-tetrahydrofolate + L-serine. The protein operates within one-carbon metabolism; tetrahydrofolate interconversion. It functions in the pathway amino-acid biosynthesis; glycine biosynthesis; glycine from L-serine: step 1/1. Catalyzes the reversible interconversion of serine and glycine with tetrahydrofolate (THF) serving as the one-carbon carrier. This reaction serves as the major source of one-carbon groups required for the biosynthesis of purines, thymidylate, methionine, and other important biomolecules. Also exhibits THF-independent aldolase activity toward beta-hydroxyamino acids, producing glycine and aldehydes, via a retro-aldol mechanism. The chain is Serine hydroxymethyltransferase from Helicobacter pylori (strain ATCC 700392 / 26695) (Campylobacter pylori).